Here is a 139-residue protein sequence, read N- to C-terminus: Acidic phospholipase A2 S1E6-c (139 aa).

A signal peptide spans 1–16; the sequence is MRTLWILAVLLVGVEG. 7 disulfides stabilise this stretch: Cys42–Cys132, Cys44–Cys60, Cys59–Cys111, Cys65–Cys139, Cys66–Cys104, Cys73–Cys97, and Cys91–Cys102. Positions 43, 45, and 47 each coordinate Ca(2+). His63 is a catalytic residue. Asp64 is a binding site for Ca(2+). Asp105 is an active-site residue.

This sequence belongs to the phospholipase A2 family. Group II subfamily. D49 sub-subfamily. Homodimer. Ca(2+) serves as cofactor. As to expression, expressed by the venom gland.

The protein localises to the secreted. It catalyses the reaction a 1,2-diacyl-sn-glycero-3-phosphocholine + H2O = a 1-acyl-sn-glycero-3-phosphocholine + a fatty acid + H(+). In terms of biological role, snake venom phospholipase A2 (PLA2) that inhibits ADP-induced platelet aggregation. PLA2 catalyzes the calcium-dependent hydrolysis of the 2-acyl groups in 3-sn-phosphoglycerides. This chain is Acidic phospholipase A2 S1E6-c, found in Calloselasma rhodostoma (Malayan pit viper).